The sequence spans 705 residues: Gamma-adducin (705 aa).

Residues 1-10 are compositionally biased toward polar residues; the sequence is MSSDTSQAVI. The disordered stretch occupies residues 1 to 22; it reads MSSDTSQAVITTPPPPSMPHKE. Position 2 is an N-acetylserine (serine 2). A phosphoserine mark is found at serine 31, serine 42, serine 64, serine 402, serine 414, serine 423, serine 442, and serine 461. Disordered stretches follow at residues 472-495, 535-556, 572-612, and 658-705; these read EDPSKVSSGTPIKIEDPNQFVPLN, PSTMRFEDDDQGPPAPPNPFSH, KQQG…EENH, and EITI…KVEA. Residue lysine 484 forms a Glycyl lysine isopeptide (Lys-Gly) (interchain with G-Cter in SUMO2) linkage. Residues serine 583, serine 585, serine 590, serine 672, serine 676, serine 678, and serine 680 each carry the phosphoserine modification. The segment covering 590–605 has biased composition (low complexity); sequence SVSQIQSQTQSPQSVP. Positions 681–705 are enriched in basic residues; sequence PSKKKKKFRTPSFLKKNKKKEKVEA. The residue at position 682 (serine 682) is a Phosphoserine; by PKC. An interaction with calmodulin region spans residues 683–700; the sequence is KKKKKFRTPSFLKKNKKK.

This sequence belongs to the aldolase class II family. Adducin subfamily. Heterodimer of an alpha and a gamma subunit. In terms of processing, sumoylated. Proteolytically cleaved by asparagine endopeptidase (AEP) into 2 fragments. Overexpression of the 1-357 fragment induces neuronal apoptosis, and overexpression of either 1-357 or 358-706 fragment increases the degeneration of dendritic spines. Overexpression of the 1-357 fragment impairs neurite outgrowth by downregulating the expression of Rac2, and induces synaptic dysfunction and cognitive impairments in tau P301S transgenic mice, a mouse model for Alzheimer disease (AD). In terms of tissue distribution, expressed in kidney, brain, spleen, liver and heart. Expressed in renal interlobular arteries, afferent/efferent arterioles, parietal glomerular epithelial cells and microvilli of the luminal surface of the proximal tubule (at protein level). Expressed in podocytes (at protein level) Expressed in renal cortex (at protein level). Expressed in primary vascular smooth muscle cells (VSMCs) of the kidney (at protein level). Expressed in tubular cells and glomeruli (at protein level).

It localises to the cytoplasm. Its subcellular location is the cytoskeleton. It is found in the cell membrane. In terms of biological role, membrane-cytoskeleton-associated protein that promotes the assembly of the spectrin-actin network. Plays a role in actin filament capping. Binds to calmodulin. Involved in myogenic reactivity of the renal afferent arteriole (Af-art), renal interlobular arteries and middle cerebral artery (MCA) to increased perfusion pressure. Involved in regulation of potassium channels in the vascular smooth muscle cells (VSMCs) of the Af-art and MCA ex vivo. Involved in regulation of glomerular capillary pressure, glomerular filtration rate (GFR) and glomerular nephrin expression in response to hypertension. Involved in renal blood flow (RBF) autoregulation. Plays a role in podocyte structure and function. Regulates globular monomer actin (G-actin) and filamentous polymer actin (F-actin) ratios in the primary podocytes affecting actin cytoskeleton organization. Regulates expression of synaptopodin, RhoA, Rac1 and CDC42 in the renal cortex and the primary podocytes. Regulates expression of nephrin in the glomeruli and in the primary podocytes, expression of nephrin and podocinin in the renal cortex, and expression of focal adhesion proteins integrin alpha-3 and integrin beta-1 in the glomeruli. Involved in cell migration and cell adhesion of podocytes, and in podocyte foot process effacement. Regulates expression of profibrotics markers MMP2, MMP9, TGF beta-1, tubular tight junction protein E-cadherin, and mesenchymal markers vimentin and alpha-SMA. Promotes the growth of neurites. This chain is Gamma-adducin (Add3), found in Rattus norvegicus (Rat).